Consider the following 419-residue polypeptide: Histidine--tRNA ligase (419 aa).

It belongs to the class-II aminoacyl-tRNA synthetase family. In terms of assembly, homodimer.

The protein localises to the cytoplasm. It carries out the reaction tRNA(His) + L-histidine + ATP = L-histidyl-tRNA(His) + AMP + diphosphate + H(+). The sequence is that of Histidine--tRNA ligase from Novosphingobium aromaticivorans (strain ATCC 700278 / DSM 12444 / CCUG 56034 / CIP 105152 / NBRC 16084 / F199).